We begin with the raw amino-acid sequence, 98 residues long: Aspartyl/glutamyl-tRNA(Asn/Gln) amidotransferase subunit C (98 aa).

A disordered region spans residues 70-98 (PSLTPEQALSGAPAQEQQRFKVPQILGED).

This sequence belongs to the GatC family. In terms of assembly, heterotrimer of A, B and C subunits.

It catalyses the reaction L-glutamyl-tRNA(Gln) + L-glutamine + ATP + H2O = L-glutaminyl-tRNA(Gln) + L-glutamate + ADP + phosphate + H(+). It carries out the reaction L-aspartyl-tRNA(Asn) + L-glutamine + ATP + H2O = L-asparaginyl-tRNA(Asn) + L-glutamate + ADP + phosphate + 2 H(+). Its function is as follows. Allows the formation of correctly charged Asn-tRNA(Asn) or Gln-tRNA(Gln) through the transamidation of misacylated Asp-tRNA(Asn) or Glu-tRNA(Gln) in organisms which lack either or both of asparaginyl-tRNA or glutaminyl-tRNA synthetases. The reaction takes place in the presence of glutamine and ATP through an activated phospho-Asp-tRNA(Asn) or phospho-Glu-tRNA(Gln). The protein is Aspartyl/glutamyl-tRNA(Asn/Gln) amidotransferase subunit C of Streptomyces avermitilis (strain ATCC 31267 / DSM 46492 / JCM 5070 / NBRC 14893 / NCIMB 12804 / NRRL 8165 / MA-4680).